The following is a 337-amino-acid chain: Large ribosomal subunit protein uL10 (337 aa).

The tract at residues Glu309 to Gly337 is disordered. Residues Glu310–Asp327 show a composition bias toward acidic residues.

It belongs to the universal ribosomal protein uL10 family. As to quaternary structure, part of the 50S ribosomal subunit. Forms part of the ribosomal stalk which helps the ribosome interact with GTP-bound translation factors. Forms a heptameric L10(L12)2(L12)2(L12)2 complex, where L10 forms an elongated spine to which the L12 dimers bind in a sequential fashion.

Functionally, forms part of the ribosomal stalk, playing a central role in the interaction of the ribosome with GTP-bound translation factors. This is Large ribosomal subunit protein uL10 from Methanococcoides burtonii (strain DSM 6242 / NBRC 107633 / OCM 468 / ACE-M).